A 187-amino-acid polypeptide reads, in one-letter code: MPNQEKMEKAIYQFLEALGENPDREGLKDTPKRVAKMYIEMFSGLNQDPKEQFTAVFSENHEEVVIVKDIPFYSMCEHHLVPFYGKAHIAYLPNDGRVTGLSKLARAVEVASKRPQLQERLTAQVAQALEDALAPKGIFVMIEAEHMCMTMRGIKKPGSKTITTVARGLYKDDRYERQEILSLIQKG.

Zn(2+) contacts are provided by Cys76, His79, and Cys148.

It belongs to the GTP cyclohydrolase I family. In terms of assembly, toroid-shaped homodecamer, composed of two pentamers of five dimers.

The catalysed reaction is GTP + H2O = 7,8-dihydroneopterin 3'-triphosphate + formate + H(+). Its pathway is cofactor biosynthesis; 7,8-dihydroneopterin triphosphate biosynthesis; 7,8-dihydroneopterin triphosphate from GTP: step 1/1. This Streptococcus agalactiae serotype Ia (strain ATCC 27591 / A909 / CDC SS700) protein is GTP cyclohydrolase 1.